The primary structure comprises 276 residues: Formamidopyrimidine-DNA glycosylase (276 aa).

P2 functions as the Schiff-base intermediate with DNA in the catalytic mechanism. The active-site Proton donor is E3. Catalysis depends on K58, which acts as the Proton donor; for beta-elimination activity. H92, R111, and R153 together coordinate DNA. An FPG-type zinc finger spans residues T238–Y272. R262 functions as the Proton donor; for delta-elimination activity in the catalytic mechanism.

The protein belongs to the FPG family. In terms of assembly, monomer. Zn(2+) serves as cofactor.

It catalyses the reaction Hydrolysis of DNA containing ring-opened 7-methylguanine residues, releasing 2,6-diamino-4-hydroxy-5-(N-methyl)formamidopyrimidine.. It carries out the reaction 2'-deoxyribonucleotide-(2'-deoxyribose 5'-phosphate)-2'-deoxyribonucleotide-DNA = a 3'-end 2'-deoxyribonucleotide-(2,3-dehydro-2,3-deoxyribose 5'-phosphate)-DNA + a 5'-end 5'-phospho-2'-deoxyribonucleoside-DNA + H(+). Its function is as follows. Involved in base excision repair of DNA damaged by oxidation or by mutagenic agents. Acts as a DNA glycosylase that recognizes and removes damaged bases. Has a preference for oxidized purines, such as 7,8-dihydro-8-oxoguanine (8-oxoG). Has AP (apurinic/apyrimidinic) lyase activity and introduces nicks in the DNA strand. Cleaves the DNA backbone by beta-delta elimination to generate a single-strand break at the site of the removed base with both 3'- and 5'-phosphates. This Rickettsia felis (strain ATCC VR-1525 / URRWXCal2) (Rickettsia azadi) protein is Formamidopyrimidine-DNA glycosylase.